We begin with the raw amino-acid sequence, 108 residues long: Ig kappa chain V region GOM (108 aa).

The segment at 1 to 23 (DIVMTQTPLSLSVSPGEPASISC) is framework-1. The cysteines at positions 23 and 88 are disulfide-linked. Positions 24–34 (RSSQSNLDYLN) are complementarity-determining-1. Positions 35 to 49 (WYLQKAGQSPRLLPE) are framework-2. Residues 44-66 (PRLLPEQDSQRASGVPDRFSGSG) are disordered. Residues 50 to 56 (QDSQRAS) form a complementarity-determining-2 region. Residues 57–88 (GVPDRFSGSGSGTDFTLRIGRVEAEDAGIYYC) are framework-3. The segment at 89–97 (MQRSFYPYT) is complementarity-determining-3. The framework-4 stretch occupies residues 98–107 (FGQGTRLEVR).

The polypeptide is Ig kappa chain V region GOM (Canis lupus familiaris (Dog)).